A 577-amino-acid chain; its full sequence is E3 ubiquitin-protein ligase MSL2 (577 aa).

The segment at 1–116 (MNPVNATALY…CEYITQTTLA (116 aa)) is sufficient for interaction with MSL1. Positions 44, 47, 62, 64, 67, 70, 81, and 84 each coordinate Zn(2+). The segment at 44–85 (CCVCGHLLQDPIAPTNSTCQHYVCKTCKGKKMMMKPSCSWCK) adopts an RING-type zinc-finger fold. Lysine 375 is covalently cross-linked (Glycyl lysine isopeptide (Lys-Gly) (interchain with G-Cter in SUMO2)). A disordered region spans residues 405–428 (TKSMKKSHEHGSKKSHSKSKPGIL). The segment covering 407-423 (SMKKSHEHGSKKSHSKS) has biased composition (basic residues). The residue at position 447 (serine 447) is a Phosphoserine. A CXC MSL2-type domain is found at 457–508 (QEKKGCKCGRATQNPSVLTCRGQRCPCYSNRKACLDCICRGCQNSYMANGEK). Zn(2+) contacts are provided by cysteine 462, cysteine 464, cysteine 476, cysteine 481, cysteine 483, cysteine 490, cysteine 493, cysteine 495, and cysteine 498.

Belongs to the MSL2 family. In terms of assembly, component of a multisubunit histone acetyltransferase complex (MSL) at least composed of the KAT8/MOF/MYST1, MSL1/hampin, MSL2 and MSL3. Forms a MSL heterotetrameric core with MSL1.

It localises to the nucleus. It is found in the chromosome. The enzyme catalyses S-ubiquitinyl-[E2 ubiquitin-conjugating enzyme]-L-cysteine + [acceptor protein]-L-lysine = [E2 ubiquitin-conjugating enzyme]-L-cysteine + N(6)-ubiquitinyl-[acceptor protein]-L-lysine.. It functions in the pathway protein modification; protein ubiquitination. In terms of biological role, non-catalytic component of the MSL histone acetyltransferase complex, a multiprotein complex that mediates the majority of histone H4 acetylation at 'Lys-16' (H4K16ac), an epigenetic mark that prevents chromatin compaction. The MSL complex is required for chromosome stability and genome integrity by maintaining homeostatic levels of H4K16ac. The MSL complex is also involved in gene dosage by promoting up-regulation of genes expressed by the X chromosome. X up-regulation is required to compensate for autosomal biallelic expression. The MSL complex also participates in gene dosage compensation by promoting expression of Tsix non-coding RNA. MSL2 plays a key role in gene dosage by ensuring biallelic expression of a subset of dosage-sensitive genes, including many haploinsufficient genes. Acts by promoting promoter-enhancer contacts, thereby preventing DNA methylation of one allele and creating a methylation-free environment for methylation-sensitive transcription factors such as SP1, KANSL1 and KANSL3. Also acts as an E3 ubiquitin ligase that promotes monoubiquitination of histone H2B at 'Lys-35' (H2BK34Ub), but not that of H2A. This activity is greatly enhanced by heterodimerization with MSL1. H2B ubiquitination in turn stimulates histone H3 methylation at 'Lys-4' (H3K4me) and 'Lys-79' (H3K79me) and leads to gene activation, including that of HOXA9 and MEIS1. The protein is E3 ubiquitin-protein ligase MSL2 of Mus musculus (Mouse).